A 301-amino-acid polypeptide reads, in one-letter code: G-protein coupled receptor homolog U51 (301 aa).

The Extracellular segment spans residues 1-15 (MEKETKSLAWPATAE). A helical membrane pass occupies residues 16-36 (FYGWVFIFSSIQLCTVVFLTV). The Cytoplasmic portion of the chain corresponds to 37-48 (RFNGFKVGREYA). A helical membrane pass occupies residues 49-69 (VFTFAGMSFNCFLLPIKMGLL). Residues 70 to 82 (SGHWTLPRDFCAI) lie on the Extracellular side of the membrane. A helical transmembrane segment spans residues 83-103 (LLYIDDFSAYFSSWSLVFMAI). Residues 104–122 (ERINYFCYSTPLLNENSKA) are Cytoplasmic-facing. Residues 123–143 (LAKVCFPIVWVVSGVQALQML) form a helical membrane-spanning segment. Residues 144-168 (NNYKATALQNETGQCFLAFLRSGHD) are Extracellular-facing. Asn153 is a glycosylation site (N-linked (GlcNAc...) asparagine; by host). A helical transmembrane segment spans residues 169–189 (MWLMLVYSVVIPVMLVFFYLY). Residues 190 to 199 (SKNFMLLKDE) are Cytoplasmic-facing. A helical membrane pass occupies residues 200–220 (LSSVTTYLCIYLLLGTIAHLP). Residues 221–238 (KAALSEIESDKIFYGLRD) lie on the Extracellular side of the membrane. The helical transmembrane segment at 239–259 (IFMALPVLKVYYISAMAYCMA) threads the bilayer. At 260–301 (CDDHTVPVRLCSIWLVNLCKKCFSCTRREKGSDLEVGIKMLK) the chain is on the cytoplasmic side.

It belongs to the G-protein coupled receptor 1 family.

The protein localises to the host cell membrane. This Homo sapiens (Human) protein is G-protein coupled receptor homolog U51 (U51).